The primary structure comprises 217 residues: Probable transaldolase (217 aa).

The active-site Schiff-base intermediate with substrate is the Lys83.

This sequence belongs to the transaldolase family. Type 3B subfamily.

It localises to the cytoplasm. The catalysed reaction is D-sedoheptulose 7-phosphate + D-glyceraldehyde 3-phosphate = D-erythrose 4-phosphate + beta-D-fructose 6-phosphate. Its pathway is carbohydrate degradation; pentose phosphate pathway; D-glyceraldehyde 3-phosphate and beta-D-fructose 6-phosphate from D-ribose 5-phosphate and D-xylulose 5-phosphate (non-oxidative stage): step 2/3. In terms of biological role, transaldolase is important for the balance of metabolites in the pentose-phosphate pathway. In Ruegeria pomeroyi (strain ATCC 700808 / DSM 15171 / DSS-3) (Silicibacter pomeroyi), this protein is Probable transaldolase.